A 137-amino-acid polypeptide reads, in one-letter code: Nucleoside diphosphate kinase (137 aa).

Residues Lys-9, Phe-58, Arg-86, Thr-92, Arg-103, and Asn-113 each coordinate ATP. Residue His-121 is the Pros-phosphohistidine intermediate of the active site.

The protein belongs to the NDK family. In terms of assembly, homotetramer. Mg(2+) is required as a cofactor.

It localises to the cytoplasm. It catalyses the reaction a 2'-deoxyribonucleoside 5'-diphosphate + ATP = a 2'-deoxyribonucleoside 5'-triphosphate + ADP. The enzyme catalyses a ribonucleoside 5'-diphosphate + ATP = a ribonucleoside 5'-triphosphate + ADP. Its function is as follows. Major role in the synthesis of nucleoside triphosphates other than ATP. The ATP gamma phosphate is transferred to the NDP beta phosphate via a ping-pong mechanism, using a phosphorylated active-site intermediate. The sequence is that of Nucleoside diphosphate kinase from Streptococcus pneumoniae (strain Hungary19A-6).